Consider the following 253-residue polypeptide: MSNLLEKFKNKSKSLFFIPFFVSGFPSFDFLEVFLLKNKDKIDILELGVPFSDPVADGPVLQEINYRAMVRGVNLNSTLDWLVRSGVSRNIDVILLLYFNLIQNKLEENLKRFKDTEIKGLVIPDLPMEEAETLIPLFNKYNLDLILFISPTTRDERMKKILKMAPSFLYCISVKGVTGERDKLPEEGVSFISRIKKETDKPLVWGFGLSNSSQIAALKGLVDGVIVGSAIGKRLLNNEDIQEYFDELYRATL.

Active-site proton acceptor residues include E46 and D57.

Belongs to the TrpA family. Tetramer of two alpha and two beta chains.

The catalysed reaction is (1S,2R)-1-C-(indol-3-yl)glycerol 3-phosphate + L-serine = D-glyceraldehyde 3-phosphate + L-tryptophan + H2O. The protein operates within amino-acid biosynthesis; L-tryptophan biosynthesis; L-tryptophan from chorismate: step 5/5. The alpha subunit is responsible for the aldol cleavage of indoleglycerol phosphate to indole and glyceraldehyde 3-phosphate. The polypeptide is Tryptophan synthase alpha chain (Dictyoglomus turgidum (strain DSM 6724 / Z-1310)).